Here is a 419-residue protein sequence, read N- to C-terminus: Probable dual-specificity RNA methyltransferase RlmN (419 aa).

Positions 1-21 (MTAESDSPDGPVSAGTGRPVR) are disordered. Glu124 functions as the Proton acceptor in the catalytic mechanism. The Radical SAM core domain maps to 130–369 (YPDRATVCVS…ATTVRDTRGR (240 aa)). Cys137 and Cys375 are joined by a disulfide. Residues Cys144, Cys148, and Cys151 each coordinate [4Fe-4S] cluster. S-adenosyl-L-methionine is bound by residues 199–200 (GE), Ser233, 256–258 (SLH), and Asn332. Cys375 (S-methylcysteine intermediate) is an active-site residue. The segment at 383 to 419 (AGRARRVESARPVESARPVGVAGAASGSPAHGSRVLR) is disordered. Positions 397-419 (SARPVGVAGAASGSPAHGSRVLR) are enriched in low complexity.

This sequence belongs to the radical SAM superfamily. RlmN family. Requires [4Fe-4S] cluster as cofactor.

The protein resides in the cytoplasm. It catalyses the reaction adenosine(2503) in 23S rRNA + 2 reduced [2Fe-2S]-[ferredoxin] + 2 S-adenosyl-L-methionine = 2-methyladenosine(2503) in 23S rRNA + 5'-deoxyadenosine + L-methionine + 2 oxidized [2Fe-2S]-[ferredoxin] + S-adenosyl-L-homocysteine. The enzyme catalyses adenosine(37) in tRNA + 2 reduced [2Fe-2S]-[ferredoxin] + 2 S-adenosyl-L-methionine = 2-methyladenosine(37) in tRNA + 5'-deoxyadenosine + L-methionine + 2 oxidized [2Fe-2S]-[ferredoxin] + S-adenosyl-L-homocysteine. Functionally, specifically methylates position 2 of adenine 2503 in 23S rRNA and position 2 of adenine 37 in tRNAs. The polypeptide is Probable dual-specificity RNA methyltransferase RlmN (Frankia alni (strain DSM 45986 / CECT 9034 / ACN14a)).